Consider the following 334-residue polypeptide: MTTVYYDQDVKTDALQGKKIAVVGYGSQGHAHAQNLKDNGYDVVIGIRPGRSFDKAKEDGFDVFPVAEAVKQADVIMVLLPDEIQGDVYKNEIEPNLEKHNALAFAHGFNIHFGVIQPPADVDVFLVAPKGPGHLVRRTFVEGSAVPSLFGIQQDASGQARNIALSYAKGIGATRAGVIETTFKEETETDLFGEQAVLCGGVSKLIQSGFETLVEAGYQPELAYFEVLHEMKLIVDLMYEGGTENVRYSISNTAEFGDYVSGPRVITPDVKENMKAVLTDIQNGNFSNRFIEDNKNGFKEFYKLREEQHGHQIEKVGRELREMMPFIKSKSIEK.

The KARI N-terminal Rossmann domain occupies Met1–Thr181. Residues Tyr25 to Gln28, Arg48, Ser52, and Asp82 to Gln85 contribute to the NADP(+) site. His107 is a catalytic residue. An NADP(+)-binding site is contributed by Gly133. The region spanning Thr182–Ile327 is the KARI C-terminal knotted domain. Mg(2+) contacts are provided by Asp190, Glu194, Glu226, and Glu230. Ser251 serves as a coordination point for substrate.

Belongs to the ketol-acid reductoisomerase family. The cofactor is Mg(2+).

The catalysed reaction is (2R)-2,3-dihydroxy-3-methylbutanoate + NADP(+) = (2S)-2-acetolactate + NADPH + H(+). It catalyses the reaction (2R,3R)-2,3-dihydroxy-3-methylpentanoate + NADP(+) = (S)-2-ethyl-2-hydroxy-3-oxobutanoate + NADPH + H(+). It functions in the pathway amino-acid biosynthesis; L-isoleucine biosynthesis; L-isoleucine from 2-oxobutanoate: step 2/4. The protein operates within amino-acid biosynthesis; L-valine biosynthesis; L-valine from pyruvate: step 2/4. Involved in the biosynthesis of branched-chain amino acids (BCAA). Catalyzes an alkyl-migration followed by a ketol-acid reduction of (S)-2-acetolactate (S2AL) to yield (R)-2,3-dihydroxy-isovalerate. In the isomerase reaction, S2AL is rearranged via a Mg-dependent methyl migration to produce 3-hydroxy-3-methyl-2-ketobutyrate (HMKB). In the reductase reaction, this 2-ketoacid undergoes a metal-dependent reduction by NADPH to yield (R)-2,3-dihydroxy-isovalerate. The polypeptide is Ketol-acid reductoisomerase (NADP(+)) (Staphylococcus aureus (strain MSSA476)).